A 328-amino-acid chain; its full sequence is L-lactate dehydrogenase (328 aa).

Residues Val-18, Glu-39, Lys-46, Tyr-71, and 85–86 contribute to the NAD(+) site; that span reads GA. Residues Gln-88 and Arg-94 each coordinate substrate. Residues Ser-107, 124-126, and Ser-149 contribute to the NAD(+) site; that span reads AAN. Substrate is bound at residue 126–129; the sequence is NPVD. A substrate-binding site is contributed by 154–157; it reads DSAR. Beta-D-fructose 1,6-bisphosphate-binding residues include Arg-159 and His-174. The active-site Proton acceptor is His-181. The residue at position 226 (Tyr-226) is a Phosphotyrosine. Thr-235 is a binding site for substrate.

Belongs to the LDH/MDH superfamily. LDH family. Homotetramer.

It localises to the cytoplasm. It carries out the reaction (S)-lactate + NAD(+) = pyruvate + NADH + H(+). It participates in fermentation; pyruvate fermentation to lactate; (S)-lactate from pyruvate: step 1/1. With respect to regulation, allosterically activated by fructose 1,6-bisphosphate (FBP). Its function is as follows. Catalyzes the conversion of lactate to pyruvate. This Streptococcus thermophilus (strain ATCC BAA-250 / LMG 18311) protein is L-lactate dehydrogenase.